The following is a 912-amino-acid chain: Protein translocase subunit SecA (912 aa).

ATP is bound by residues Gln-87, 105-109, and Asp-508; that span reads GEGKT. A disordered region spans residues 855 to 912; sequence QHQDAGGYGADEEVEQMQGGNAPVPVSQVTRDEPKVGRNDPCPCGSGKKYKHCHGQLS. Residues Cys-896, Cys-898, Cys-907, and His-908 each coordinate Zn(2+). Basic residues predominate over residues 902–912; that stretch reads KKYKHCHGQLS.

It belongs to the SecA family. Monomer and homodimer. Part of the essential Sec protein translocation apparatus which comprises SecA, SecYEG and auxiliary proteins SecDF-YajC and YidC. Zn(2+) serves as cofactor.

It is found in the cell inner membrane. The protein resides in the cytoplasm. It catalyses the reaction ATP + H2O + cellular proteinSide 1 = ADP + phosphate + cellular proteinSide 2.. Functionally, part of the Sec protein translocase complex. Interacts with the SecYEG preprotein conducting channel. Has a central role in coupling the hydrolysis of ATP to the transfer of proteins into and across the cell membrane, serving both as a receptor for the preprotein-SecB complex and as an ATP-driven molecular motor driving the stepwise translocation of polypeptide chains across the membrane. The polypeptide is Protein translocase subunit SecA (Xanthomonas campestris pv. campestris (strain 8004)).